The chain runs to 446 residues: 23S rRNA (uracil(1939)-C(5))-methyltransferase RlmD (446 aa).

The region spanning K6–E64 is the TRAM domain. Residues C77, C83, C86, and C165 each contribute to the [4Fe-4S] cluster site. Residues Q275, F304, N309, E325, D352, and D377 each coordinate S-adenosyl-L-methionine. C403 (nucleophile) is an active-site residue.

The protein belongs to the class I-like SAM-binding methyltransferase superfamily. RNA M5U methyltransferase family. RlmD subfamily.

It catalyses the reaction uridine(1939) in 23S rRNA + S-adenosyl-L-methionine = 5-methyluridine(1939) in 23S rRNA + S-adenosyl-L-homocysteine + H(+). Functionally, catalyzes the formation of 5-methyl-uridine at position 1939 (m5U1939) in 23S rRNA. The sequence is that of 23S rRNA (uracil(1939)-C(5))-methyltransferase RlmD from Hahella chejuensis (strain KCTC 2396).